Consider the following 557-residue polypeptide: Anthrax toxin receptor-like (557 aa).

A signal peptide spans M1–A25. Residues G26–T345 are Extracellular-facing. The VWFA domain maps to D74 to L244. Positions 82, 84, and 148 each coordinate a divalent metal cation. The helical transmembrane segment at C346–L366 threads the bilayer. Residues C367 to D557 are Cytoplasmic-facing. Disordered stretches follow at residues E380–P411 and E497–D557. Positions K386–K395 are enriched in basic and acidic residues. Pro residues predominate over residues P396–P411. The segment covering G534–D557 has biased composition (polar residues).

The protein belongs to the ATR family.

The protein localises to the membrane. The chain is Anthrax toxin receptor-like (ANTXRL) from Macaca fascicularis (Crab-eating macaque).